We begin with the raw amino-acid sequence, 898 residues long: MAIQKLENYNNKEAIREEVTILTSILEEVAAQMMPAETFAKIVELSQLSRQDDYQALIAIISQLNNDELAVISRYFAVLPLLINISEDVDLAYEINHQNNIDQDYLGKISTTIDMVSKQENAAEILEKLNVVPVLTAHPTQVQRQSMLDLTKHIHELLRRYRDVKLGLLNKNKWEDELRCYIEIIMQTDMIREKKLKVTNEITNVMEYYNSSFIKAVTKLQREYKRLAAEKGIVLNNPRPITMGMWIGGDRDGNPFVTAETLKLSALTQCEVIMNYYDEQLYKLYRNFSLSTSIVNVSTAVKMLADLSEDSSVYRENEPYRRAFHYIQMKLANTRDYLVHNKPSDVRYSNVAEFKADLLAIKQSLVENKSMALLKGDFTELLEAVEAFGFYLASIDMRQDSSIHEASVAELLASARIVEDYSSLSEEAKCHVLLKQLETDPRILSATHMPKSEQLEKELAIFAAARELKDKLGEEIIKQHIISHSESVSDLLELAVLLKEVGLVDVDKARVQIVPLFETIEDLDNAPDTMRQYLQLDLAKRWIAGNKYYQEIMLGYSDSNKDGGYLSSGWTLYKAQNELTQIGQDYGVNITFFHGRGGTVGRGGGPSYDAITSQPFGSIKDRLRLTEQGEVIGNKYGNKDAAYYNLEMLVSATLDRMVTQMITDPNEIDGYRETMDEIVSDSYRIYRDLVFNNPHFYDYFFAASPIREVSSLNIGSRPAARKTITEIGGLRAIPWVFSWSQNRVMLPGWYGVGSSFKRFIDKHPDNLSKLQKMYESWPFFRSLLSNVDMVLSKSNMNIAFEYAKMCESEEVRNIFHVILDEWQLTKEIILSIEQNDELLAELPFLKASLDYRMPYFNVLNYIQIELIHRLRRGELSKEQENLIHITINGVATGLRNSG.

Residues histidine 138 and lysine 561 contribute to the active site.

The protein belongs to the PEPCase type 1 family. Mg(2+) is required as a cofactor.

The enzyme catalyses oxaloacetate + phosphate = phosphoenolpyruvate + hydrogencarbonate. Functionally, forms oxaloacetate, a four-carbon dicarboxylic acid source for the tricarboxylic acid cycle. This is Phosphoenolpyruvate carboxylase from Streptococcus suis (strain 98HAH33).